We begin with the raw amino-acid sequence, 1374 residues long: Sterol 3-beta-glucosyltransferase (1374 aa).

Residues 1–14 (MRPLRDDAKRRADR) show a composition bias toward basic and acidic residues. Disordered stretches follow at residues 1 to 60 (MRPL…RDGN), 83 to 190 (ARFD…PRAA), and 206 to 227 (TSAT…QPQS). Residues 16–28 (LSASMKPTSSNRP) are compositionally biased toward polar residues. Basic and acidic residues predominate over residues 29-41 (FSDRVPDRFKDGD). Residues 101-112 (VEQTTGKASSRT) are compositionally biased toward polar residues. Residues 125-138 (KRSEPSKLVLEERG) are compositionally biased toward basic and acidic residues. A GRAM 1 domain is found at 234–283 (MRLMKMFEFAKPEKVLVEYACSLLQSMLLQGYMYVTEGHICFYAYLPKKS). Residues 285–382 (VAIKSGYLSK…WVKALQQVIF (98 aa)) enclose the PH domain. Residues 458 to 538 (ATKEAQDQHD…SMTDTTESAS (81 aa)) form a disordered region. 2 stretches are compositionally biased toward basic and acidic residues: residues 461 to 473 (EAQD…HQPE) and 490 to 499 (SDQRREDSPR). Over residues 503-538 (SSVGNENQGSADSFAEQGTGSSPIIQSMTDTTESAS) the composition is skewed to polar residues. The region spanning 704-770 (DRFRAHFALP…KDIENVEKEK (67 aa)) is the GRAM 2 domain. UDP-alpha-D-glucose-binding residues include Ser893, Arg894, Asp896, Ala1196, His1198, His1211, Gly1215, Thr1216, Asp1235, and Gln1236. Positions 1314-1325 (ASSTPFSPTPTA) are enriched in polar residues. The interval 1314 to 1338 (ASSTPFSPTPTAKASPDGGDDDLDD) is disordered.

The protein belongs to the glycosyltransferase 28 family.

It localises to the cytoplasm. The protein resides in the preautophagosomal structure membrane. It catalyses the reaction a sterol + UDP-alpha-D-glucose = a sterol 3-beta-D-glucoside + UDP + H(+). The enzyme catalyses ergosterol + UDP-alpha-D-glucose = ergosteryl 3-beta-D-glucoside + UDP + H(+). In terms of biological role, sterol glycosyltransferase responsible for the glycosylation of ergosterol to form ergosterol-glucoside. This chain is Sterol 3-beta-glucosyltransferase, found in Penicillium rubens (strain ATCC 28089 / DSM 1075 / NRRL 1951 / Wisconsin 54-1255) (Penicillium chrysogenum).